A 233-amino-acid chain; its full sequence is Ion-translocating oxidoreductase complex subunit E (233 aa).

The next 6 helical transmembrane spans lie at 18 to 38 (ALVQLLGLCPLLAVSSTATNA), 39 to 59 (LGLGLATTLVLVCTNTAVSAL), 69 to 89 (IPIYVMIIASVVSTVQMLINA), 92 to 112 (FGLYQSLGIFIPLIVTNCIVI), 128 to 148 (ALDGFAMGMGATCALFVLGAL), and 182 to 202 (PFLLAMLPPGAFIGLGLLLAG).

It belongs to the NqrDE/RnfAE family. In terms of assembly, the complex is composed of six subunits: RnfA, RnfB, RnfC, RnfD, RnfE and RnfG.

The protein localises to the cell inner membrane. Functionally, part of a membrane-bound complex that couples electron transfer with translocation of ions across the membrane. The polypeptide is Ion-translocating oxidoreductase complex subunit E (Yersinia pestis bv. Antiqua (strain Angola)).